The sequence spans 166 residues: Large ribosomal subunit protein uL10 (166 aa).

The protein belongs to the universal ribosomal protein uL10 family. In terms of assembly, part of the ribosomal stalk of the 50S ribosomal subunit. The N-terminus interacts with L11 and the large rRNA to form the base of the stalk. The C-terminus forms an elongated spine to which L12 dimers bind in a sequential fashion forming a multimeric L10(L12)X complex.

Functionally, forms part of the ribosomal stalk, playing a central role in the interaction of the ribosome with GTP-bound translation factors. The chain is Large ribosomal subunit protein uL10 from Alkaliphilus metalliredigens (strain QYMF).